Reading from the N-terminus, the 250-residue chain is NAD(P)H-quinone oxidoreductase subunit K, chloroplastic (250 aa).

Positions 61, 62, 126, and 157 each coordinate [4Fe-4S] cluster.

This sequence belongs to the complex I 20 kDa subunit family. NDH is composed of at least 16 different subunits, 5 of which are encoded in the nucleus. [4Fe-4S] cluster is required as a cofactor.

The protein resides in the plastid. It is found in the chloroplast thylakoid membrane. The catalysed reaction is a plastoquinone + NADH + (n+1) H(+)(in) = a plastoquinol + NAD(+) + n H(+)(out). The enzyme catalyses a plastoquinone + NADPH + (n+1) H(+)(in) = a plastoquinol + NADP(+) + n H(+)(out). NDH shuttles electrons from NAD(P)H:plastoquinone, via FMN and iron-sulfur (Fe-S) centers, to quinones in the photosynthetic chain and possibly in a chloroplast respiratory chain. The immediate electron acceptor for the enzyme in this species is believed to be plastoquinone. Couples the redox reaction to proton translocation, and thus conserves the redox energy in a proton gradient. The polypeptide is NAD(P)H-quinone oxidoreductase subunit K, chloroplastic (Angiopteris evecta (Mule's foot fern)).